The primary structure comprises 301 residues: Sulfate adenylyltransferase subunit 2 (301 aa).

A disordered region spans residues 279–301 (RQGRLIDRDEAGSMEKKKREGYF).

The protein belongs to the PAPS reductase family. CysD subfamily. Sulfate-activating enzymes, NodP and NodQ, may be physically associated.

The enzyme catalyses sulfate + ATP + H(+) = adenosine 5'-phosphosulfate + diphosphate. Proposed to provide activated sulfate for transfer to nod factor. The sequence is that of Sulfate adenylyltransferase subunit 2 (nodP) from Rhizobium sp. (strain N33).